A 650-amino-acid chain; its full sequence is Phosphatidylinositol-3,5-bisphosphate 3-phosphatase MTMR14 (650 aa).

The interval 1–27 is disordered; the sequence is MAGARAAAAAASAGSSASSGNQPPQEL. Lysine 194 is modified (N6-acetyllysine). A glycan (N-linked (GlcNAc...) asparagine) is linked at asparagine 226. Residue cysteine 330 is the Phosphocysteine intermediate of the active site. 5 residues coordinate a 1,2-diacyl-sn-glycero-3-phospho-(1D-myo-inositol-3,5-bisphosphate): glycine 333, tryptophan 334, aspartate 335, arginine 336, and arginine 382. A 1,2-diacyl-sn-glycero-3-phospho-(1D-myo-inositol-3-phosphate) contacts are provided by glycine 333, tryptophan 334, aspartate 335, arginine 336, and arginine 382. A disordered region spans residues 476–546; that stretch reads AAWRKSHSSS…PRSVDHPLPG (71 aa). Phosphoserine is present on serine 518. Asparagine 519 is a glycosylation site (N-linked (GlcNAc...) asparagine). 3 positions are modified to phosphoserine: serine 530, serine 580, and serine 624. At arginine 638 the chain carries Omega-N-methylarginine.

This sequence belongs to the protein-tyrosine phosphatase family. Non-receptor class myotubularin subfamily. As to expression, expressed in various tissues, including heart, skeletal muscle, placenta, liver, lung, kidney and pancreas.

Its subcellular location is the cytoplasm. It carries out the reaction a 1,2-diacyl-sn-glycero-3-phospho-(1D-myo-inositol-3,5-bisphosphate) + H2O = a 1,2-diacyl-sn-glycero-3-phospho-(1D-myo-inositol-5-phosphate) + phosphate. It catalyses the reaction a 1,2-diacyl-sn-glycero-3-phospho-(1D-myo-inositol-3-phosphate) + H2O = a 1,2-diacyl-sn-glycero-3-phospho-(1D-myo-inositol) + phosphate. Functionally, lipid phosphatase that specifically dephosphorylates the D-3 position of phosphatidylinositol 3-phosphate and phosphatidylinositol 3,5-bisphosphate, generating phosphatidylinositol and phosphatidylinositol 5-phosphate. In Homo sapiens (Human), this protein is Phosphatidylinositol-3,5-bisphosphate 3-phosphatase MTMR14.